The primary structure comprises 297 residues: MGAQLRVYRQRIKSTQSMGKLFKAMELIATSRISKARSRVQASLPYANAITRAVSVVASQSEIHHPLTTEPEQILRAAVLVLTSNRGLAGSYSASVLKQAEQLNTLLQADGKEVKTYLVGNKAQAYFQFRNRSFTKAWVNPTDAPEFATAQEISKTLLEDFAEEFEKDGVDEIHVVYTRFKSMVVQEPTVIRLLPLEVSEEEVSESSDLLPLYEYEPEPEAVLDALLPRYIEARIFNVMLQAAASELAARQRAMKSASDNARDLVKKFTRLANTARQAEITQELSEIVAGADSLNAS.

It belongs to the ATPase gamma chain family. As to quaternary structure, F-type ATPases have 2 components, CF(1) - the catalytic core - and CF(0) - the membrane proton channel. CF(1) has five subunits: alpha(3), beta(3), gamma(1), delta(1), epsilon(1). CF(0) has three main subunits: a, b and c.

It localises to the cell membrane. Its function is as follows. Produces ATP from ADP in the presence of a proton gradient across the membrane. The gamma chain is believed to be important in regulating ATPase activity and the flow of protons through the CF(0) complex. This is ATP synthase gamma chain from Renibacterium salmoninarum (strain ATCC 33209 / DSM 20767 / JCM 11484 / NBRC 15589 / NCIMB 2235).